The following is a 94-amino-acid chain: MEKVRLTAFVHGHVQGVGFRWWTTSQARELKLAGSASNLSDGRVCVVAEGPQTQCEELLRRLKENPSSYRRPGHVDTVIEQWGEPRDVEGFVER.

An Acylphosphatase-like domain is found at 5–94 (RLTAFVHGHV…PRDVEGFVER (90 aa)). Residues Arg-20 and Asn-38 contribute to the active site.

The protein belongs to the acylphosphatase family.

The catalysed reaction is an acyl phosphate + H2O = a carboxylate + phosphate + H(+). This Corynebacterium glutamicum (strain ATCC 13032 / DSM 20300 / JCM 1318 / BCRC 11384 / CCUG 27702 / LMG 3730 / NBRC 12168 / NCIMB 10025 / NRRL B-2784 / 534) protein is Acylphosphatase (acyP).